We begin with the raw amino-acid sequence, 155 residues long: MHPKRKQRLILVLFVVLVSSVGVSLTLYALNENINLFYPPTKIVNGEAPSGRTIRAGGCVVPGTVTRAKDNLEIDFDVTDGVSELSVTYDGILPDLFAEGEAVVLTGMLDHDGVFVATKVLAKHDENYMPPEVADTVTTDGVEHMKTCKGISYDS.

The Cytoplasmic segment spans residues 1 to 8; that stretch reads MHPKRKQR. Residues 9 to 29 form a helical; Signal-anchor for type II membrane protein membrane-spanning segment; sequence LILVLFVVLVSSVGVSLTLYA. Over 30–155 the chain is Periplasmic; it reads LNENINLFYP…KTCKGISYDS (126 aa). The heme site is built by His124 and Tyr128.

The protein belongs to the CcmE/CycJ family.

It localises to the cell inner membrane. In terms of biological role, heme chaperone required for the biogenesis of c-type cytochromes. Transiently binds heme delivered by CcmC and transfers the heme to apo-cytochromes in a process facilitated by CcmF and CcmH. This is Cytochrome c-type biogenesis protein CcmE from Teredinibacter turnerae (strain ATCC 39867 / T7901).